A 272-amino-acid polypeptide reads, in one-letter code: F-actin-capping protein subunit beta (272 aa).

This sequence belongs to the F-actin-capping protein beta subunit family. As to quaternary structure, component of the F-actin capping complex, composed of a heterodimer of an alpha and a beta subunit.

It is found in the cytoplasm. It localises to the cytoskeleton. In terms of biological role, F-actin-capping proteins bind in a Ca(2+)-independent manner to the fast growing ends of actin filaments (barbed end) thereby blocking the exchange of subunits at these ends. Unlike other capping proteins (such as gelsolin and severin), these proteins do not sever actin filaments. This chain is F-actin-capping protein subunit beta (acpA), found in Dictyostelium discoideum (Social amoeba).